Consider the following 145-residue polypeptide: Ribonuclease H (145 aa).

The RNase H type-1 domain maps to 2–143; sequence SKKEVAIYTD…ADSLARKAII (142 aa). Positions 11, 49, 71, and 135 each coordinate Mg(2+).

This sequence belongs to the RNase H family. Monomer. The cofactor is Mg(2+).

The protein localises to the cytoplasm. The enzyme catalyses Endonucleolytic cleavage to 5'-phosphomonoester.. Functionally, endonuclease that specifically degrades the RNA of RNA-DNA hybrids. The polypeptide is Ribonuclease H (Wolbachia sp. subsp. Drosophila simulans (strain wRi)).